The chain runs to 198 residues: Pre-histone-like nucleoprotein (198 aa).

At S2 the chain carries N-acetylserine; by host. Positions 2 to 24 are excised as a propeptide; sequence SILISPSNNTGWGLRFPSKMFGG. Residues 24–55 are disordered; that stretch reads GAKKRSDQHPVRVRGHYRAPWGAHKRGRTGRT. N6-acetyllysine; by host occurs at positions 27 and 48. Over residues 34 to 52 the composition is skewed to basic residues; it reads VRVRGHYRAPWGAHKRGRT. Residues T55 and T74 each carry the phosphothreonine; by host modification. Residues S183 and S185 each carry the phosphoserine; by host modification. Positions 188–198 match the Nuclear localization signal motif; it reads RVPVRTRPPRN.

Belongs to the adenoviridae histone-like nucleoprotein family. As to quaternary structure, interacts with the core-capsid bridging protein; this interaction bridges the virus core to the capsid. Interacts with host NPM1; this interaction might play a role in placing the pre-histone-like nucleoprotein on the viral DNA or regulating viral gene expression. Interacts with host HMGB1; this interaction inhibits host immune response. Cleaved near the N-terminus by the viral protease during virion maturation to form the mature protein.

The protein localises to the virion. It localises to the host nucleus. It is found in the host nucleolus. In terms of biological role, plays a role in the inhibition of host immune response within the nucleus. Interacts with cellular nucleosomes and immobilizes the host immune danger signal HMGB1 on chromatin. In turn, prevents HMGB1 release out of the cell and thus decreases inflammation. Also plays a role in the wrapping and condensation of the viral DNA. May also promote viral genome import into the nucleus. The sequence is that of Pre-histone-like nucleoprotein from Human adenovirus C serotype 2 (HAdV-2).